Here is a 239-residue protein sequence, read N- to C-terminus: Sugar fermentation stimulation protein homolog (239 aa).

Belongs to the SfsA family.

In Cyanothece sp. (strain PCC 7425 / ATCC 29141), this protein is Sugar fermentation stimulation protein homolog.